Here is a 260-residue protein sequence, read N- to C-terminus: Phosphate import ATP-binding protein PstB 1 (260 aa).

The ABC transporter domain occupies 8-255 (TETKNVYDVL…PEHKRTEDYV (248 aa)). An ATP-binding site is contributed by 46–53 (GPSGCGKS).

The protein belongs to the ABC transporter superfamily. Phosphate importer (TC 3.A.1.7) family. In terms of assembly, the complex is composed of two ATP-binding proteins (PstB), two transmembrane proteins (PstC and PstA) and a solute-binding protein (PstS).

It is found in the cell membrane. The catalysed reaction is phosphate(out) + ATP + H2O = ADP + 2 phosphate(in) + H(+). Its function is as follows. Part of the ABC transporter complex PstSACB involved in phosphate import. Responsible for energy coupling to the transport system. The polypeptide is Phosphate import ATP-binding protein PstB 1 (Shouchella clausii (strain KSM-K16) (Alkalihalobacillus clausii)).